Here is a 232-residue protein sequence, read N- to C-terminus: Small ribosomal subunit protein uS3 (232 aa).

The 69-residue stretch at 39–107 folds into the KH type-2 domain; sequence IREILHKELK…DVVINIVEIR (69 aa).

The protein belongs to the universal ribosomal protein uS3 family. As to quaternary structure, part of the 30S ribosomal subunit. Forms a tight complex with proteins S10 and S14.

Its function is as follows. Binds the lower part of the 30S subunit head. Binds mRNA in the 70S ribosome, positioning it for translation. This Rhodopseudomonas palustris (strain HaA2) protein is Small ribosomal subunit protein uS3.